The primary structure comprises 210 residues: Ribosomal RNA small subunit methyltransferase G (210 aa).

Residues G77, F82, 100–102 (ERS), 128–129 (VE), and R141 contribute to the S-adenosyl-L-methionine site.

This sequence belongs to the methyltransferase superfamily. RNA methyltransferase RsmG family.

The protein localises to the cytoplasm. Its function is as follows. Specifically methylates the N7 position of a guanine in 16S rRNA. This chain is Ribosomal RNA small subunit methyltransferase G, found in Borrelia duttonii (strain Ly).